A 246-amino-acid polypeptide reads, in one-letter code: Probable transcriptional regulatory protein PM0980 (246 aa).

The protein belongs to the TACO1 family.

Its subcellular location is the cytoplasm. In Pasteurella multocida (strain Pm70), this protein is Probable transcriptional regulatory protein PM0980.